The following is a 180-amino-acid chain: Oligoribonuclease (180 aa).

The 164-residue stretch at 7-170 (LIWIDLEMTG…DDIRESLAEL (164 aa)) folds into the Exonuclease domain. Residue tyrosine 128 is part of the active site.

This sequence belongs to the oligoribonuclease family.

The protein resides in the cytoplasm. Its function is as follows. 3'-to-5' exoribonuclease specific for small oligoribonucleotides. The polypeptide is Oligoribonuclease (Pectobacterium atrosepticum (strain SCRI 1043 / ATCC BAA-672) (Erwinia carotovora subsp. atroseptica)).